The primary structure comprises 218 residues: Small ribosomal subunit protein uS3c (218 aa).

A KH type-2 domain is found at 47 to 118 (IQKTIKISSG…KLNIAITRIA (72 aa)).

The protein belongs to the universal ribosomal protein uS3 family. In terms of assembly, part of the 30S ribosomal subunit.

It localises to the plastid. Its subcellular location is the chloroplast. In Lotus japonicus (Lotus corniculatus var. japonicus), this protein is Small ribosomal subunit protein uS3c (rps3).